The following is a 330-amino-acid chain: Methionyl-tRNA formyltransferase (330 aa).

(6S)-5,6,7,8-tetrahydrofolate is bound at residue 116–119 (SLLP).

The protein belongs to the Fmt family.

The enzyme catalyses L-methionyl-tRNA(fMet) + (6R)-10-formyltetrahydrofolate = N-formyl-L-methionyl-tRNA(fMet) + (6S)-5,6,7,8-tetrahydrofolate + H(+). In terms of biological role, attaches a formyl group to the free amino group of methionyl-tRNA(fMet). The formyl group appears to play a dual role in the initiator identity of N-formylmethionyl-tRNA by promoting its recognition by IF2 and preventing the misappropriation of this tRNA by the elongation apparatus. This is Methionyl-tRNA formyltransferase from Nitratidesulfovibrio vulgaris (strain DP4) (Desulfovibrio vulgaris).